The sequence spans 185 residues: Probable chorismate pyruvate-lyase 1 (185 aa).

3 residues coordinate substrate: Arg70, Leu108, and Glu166.

Belongs to the UbiC family.

It is found in the cytoplasm. It catalyses the reaction chorismate = 4-hydroxybenzoate + pyruvate. It participates in cofactor biosynthesis; ubiquinone biosynthesis. Functionally, removes the pyruvyl group from chorismate, with concomitant aromatization of the ring, to provide 4-hydroxybenzoate (4HB) for the ubiquinone pathway. The protein is Probable chorismate pyruvate-lyase 1 of Pseudomonas fluorescens (strain Pf0-1).